Consider the following 184-residue polypeptide: Probable RNA 2'-phosphotransferase (184 aa).

This sequence belongs to the KptA/TPT1 family.

Functionally, removes the 2'-phosphate from RNA via an intermediate in which the phosphate is ADP-ribosylated by NAD followed by a presumed transesterification to release the RNA and generate ADP-ribose 1''-2''-cyclic phosphate (APPR&gt;P). May function as an ADP-ribosylase. The polypeptide is Probable RNA 2'-phosphotransferase (Shigella boydii serotype 18 (strain CDC 3083-94 / BS512)).